A 258-amino-acid chain; its full sequence is Beta carbonic anhydrase 3 (258 aa).

A signal peptide spans 1–28 (MSTESYEDAIKRLGELLSKKSDLGNVAA). A coiled-coil region spans residues 24-54 (GNVAAAKIKKLTDELEELDSNKLDAVERIKS). T35 carries the phosphothreonine modification. S95 is modified (phosphoserine). Residue C201 is modified to S-nitrosocysteine.

This sequence belongs to the beta-class carbonic anhydrase family. As to expression, strongly expressed in aerial tissues including leaves, stems, flowers and siliques, and, to a lower extent, in roots.

The protein resides in the cytoplasm. It localises to the cytosol. The catalysed reaction is hydrogencarbonate + H(+) = CO2 + H2O. Functionally, reversible hydration of carbon dioxide. This is Beta carbonic anhydrase 3 (BCA3) from Arabidopsis thaliana (Mouse-ear cress).